The sequence spans 626 residues: Chaperone protein HtpG (626 aa).

Residues 1–331 form an a; substrate-binding region; it reads MSETVERHEF…TDDLPLNVSR (331 aa). The interval 332 to 544 is b; that stretch reads EMLQSTPTLQ…GMGPDLQMQR (213 aa). Residues 545–626 are c; the sequence is LLRRAGRGFG…GTVAKPAESA (82 aa).

The protein belongs to the heat shock protein 90 family. Homodimer.

The protein localises to the cytoplasm. Its function is as follows. Molecular chaperone. Has ATPase activity. The chain is Chaperone protein HtpG from Methylorubrum populi (strain ATCC BAA-705 / NCIMB 13946 / BJ001) (Methylobacterium populi).